We begin with the raw amino-acid sequence, 1178 residues long: Tricalbin-2 (1178 aa).

The segment covering 1-17 (MSPNSSKTRTDQISSMP) has biased composition (polar residues). Residues 1 to 27 (MSPNSSKTRTDQISSMPGINEATKVES) are disordered. At 1–98 (MSPNSSKTRT…NLLPDKFYGD (98 aa)) the chain is on the cytoplasmic side. Residues 99-119 (WYHEVAILIIAGLCSFVLGYF) traverse the membrane as a helical segment. Position 120 (lysine 120) is a topological domain, extracellular. The chain crosses the membrane as a helical span at residues 121-141 (FSLASVLIVMLTTGMLYRTSS). Over 142–1178 (KKYRESLRDL…TGDKKSEEKQ (1037 aa)) the chain is Cytoplasmic. In terms of domain architecture, SMP-LTD spans 164 to 367 (DYESVEWLNT…PPFSLQLNIP (204 aa)). C2 domains lie at 358–481 (PPFS…EKVH), 504–628 (PKKL…LKVT), and 632–749 (RPVD…DKYT). Residues 784-821 (LSLEEAKEVDEINEKKDKLEKQKSTLDDKNISKEEKER) adopt a coiled-coil conformation. The region spanning 962–1086 (QVSWFPVTAT…DPESDTTFNI (125 aa)) is the C2 4 domain. Serine 991 carries the phosphoserine modification.

Belongs to the tricalbin family. As to quaternary structure, interacts with TCB1 and TCB3 via its C-terminal domain.

Its subcellular location is the cell membrane. The protein resides in the endoplasmic reticulum membrane. Functionally, may play a role in membrane trafficking. This Saccharomyces cerevisiae (strain ATCC 204508 / S288c) (Baker's yeast) protein is Tricalbin-2 (TCB2).